The primary structure comprises 866 residues: Protein SEY1 (866 aa).

Residues 1 to 746 are Cytoplasmic-facing; sequence MVSNGHFAYA…KRSAIGGMTQ (746 aa). The GB1/RHD3-type G domain occupies 48-305; it reads GFNYHLISVF…IPADGFAVYA (258 aa). 58 to 65 contacts GTP; that stretch reads GSQSTGKS. The stretch at 480–506 forms a coiled coil; sequence SNYTQELALYQKDLEKISAQLRKDEMR. A helical membrane pass occupies residues 747-767; that stretch reads IPVYFYILLLALGWNEIIAVL. Over 768–770 the chain is Lumenal; sequence RNP. The helical transmembrane segment at 771–791 threads the bilayer; sequence VYFFMLFLCSVAAYIIYQLNL. The Cytoplasmic portion of the chain corresponds to 792–866; it reads WGPMVKMAEA…DDEVEGEETW (75 aa). Residues 840–866 are disordered; sequence SHVRSGRNATKINERDDDDEVEGEETW. Acidic residues predominate over residues 854–866; that stretch reads RDDDDEVEGEETW.

This sequence belongs to the TRAFAC class dynamin-like GTPase superfamily. GB1/RHD3 GTPase family. RHD3 subfamily.

The protein localises to the endoplasmic reticulum membrane. Functionally, cooperates with the reticulon proteins and tubule-shaping DP1 family proteins to generate and maintain the structure of the tubular endoplasmic reticulum network. Has GTPase activity, which is required for its function in ER organization. The polypeptide is Protein SEY1 (Coccidioides immitis (strain RS) (Valley fever fungus)).